The following is a 459-amino-acid chain: Exodeoxyribonuclease 7 large subunit (459 aa).

Belongs to the XseA family. In terms of assembly, heterooligomer composed of large and small subunits.

The protein resides in the cytoplasm. It carries out the reaction Exonucleolytic cleavage in either 5'- to 3'- or 3'- to 5'-direction to yield nucleoside 5'-phosphates.. Functionally, bidirectionally degrades single-stranded DNA into large acid-insoluble oligonucleotides, which are then degraded further into small acid-soluble oligonucleotides. The chain is Exodeoxyribonuclease 7 large subunit from Pseudomonas savastanoi pv. phaseolicola (strain 1448A / Race 6) (Pseudomonas syringae pv. phaseolicola (strain 1448A / Race 6)).